A 408-amino-acid polypeptide reads, in one-letter code: Ubiquitin-associated domain-containing protein 1 (408 aa).

The Ubiquitin-like domain occupies 14-98; the sequence is LRLQVCTMEG…LLLIKKRAPP (85 aa). Residues 100–119 are disordered; the sequence is LPKMADVSAEEKRKQEQKAP. The segment covering 108 to 119 has biased composition (basic and acidic residues); sequence AEEKRKQEQKAP. In terms of domain architecture, UBA 1 spans 185 to 231; it reads DEDEEDRVDEIALRQLTEMGFPESRAVKALRLNHMSVTQAMEWLIEH. The disordered stretch occupies residues 235 to 275; it reads PAVDAPLPGQTPSEAAAEAGASSAEATAGPSSEAGGEEAKD. Residues 245–268 show a composition bias toward low complexity; the sequence is TPSEAAAEAGASSAEATAGPSSEA. Residues 291–331 form the UBA 2 domain; it reads RPDPRAVIALMEMGFDEKEVVDALRVNNNQQNAACEWLLGD. An STI1 domain is found at 356–395; sequence NPVVQLGLTNPKTLLAFEDMLENPLNSTQWMNDPETGPVM.

Component of the KPC complex.

Its subcellular location is the cytoplasm. The protein operates within protein modification; protein ubiquitination. Its function is as follows. Non-catalytic component of the KPC complex, a E3 ubiquitin-protein ligase complex that mediates polyubiquitination of target proteins, such as CDKN1B and NFKB1. Within the KPC complex, UBAC1 acts as an adapter that promotes the transfer of target proteins that have been polyubiquitinated by RNF123/KPC1 to the 26S proteasome. The polypeptide is Ubiquitin-associated domain-containing protein 1 (UBAC1) (Gallus gallus (Chicken)).